A 392-amino-acid polypeptide reads, in one-letter code: Queuine tRNA-ribosyltransferase (392 aa).

Catalysis depends on aspartate 93, which acts as the Proton acceptor. Substrate-binding positions include 93-97 (DSGGY), aspartate 147, glutamine 189, and glycine 216. Residues 247-253 (GVGAPED) are RNA binding. Aspartate 266 (nucleophile) is an active-site residue. An RNA binding; important for wobble base 34 recognition region spans residues 271–275 (TRVAR). Cysteine 304, cysteine 306, cysteine 309, and histidine 335 together coordinate Zn(2+).

The protein belongs to the queuine tRNA-ribosyltransferase family. In terms of assembly, homodimer. Within each dimer, one monomer is responsible for RNA recognition and catalysis, while the other monomer binds to the replacement base PreQ1. Zn(2+) is required as a cofactor.

The catalysed reaction is 7-aminomethyl-7-carbaguanine + guanosine(34) in tRNA = 7-aminomethyl-7-carbaguanosine(34) in tRNA + guanine. The protein operates within tRNA modification; tRNA-queuosine biosynthesis. Its function is as follows. Catalyzes the base-exchange of a guanine (G) residue with the queuine precursor 7-aminomethyl-7-deazaguanine (PreQ1) at position 34 (anticodon wobble position) in tRNAs with GU(N) anticodons (tRNA-Asp, -Asn, -His and -Tyr). Catalysis occurs through a double-displacement mechanism. The nucleophile active site attacks the C1' of nucleotide 34 to detach the guanine base from the RNA, forming a covalent enzyme-RNA intermediate. The proton acceptor active site deprotonates the incoming PreQ1, allowing a nucleophilic attack on the C1' of the ribose to form the product. After dissociation, two additional enzymatic reactions on the tRNA convert PreQ1 to queuine (Q), resulting in the hypermodified nucleoside queuosine (7-(((4,5-cis-dihydroxy-2-cyclopenten-1-yl)amino)methyl)-7-deazaguanosine). The protein is Queuine tRNA-ribosyltransferase of Dehalococcoides mccartyi (strain ATCC BAA-2266 / KCTC 15142 / 195) (Dehalococcoides ethenogenes (strain 195)).